A 481-amino-acid chain; its full sequence is Wax ester synthase/diacylglycerol acyltransferase 1 (481 aa).

Residues 1–185 (MKAEKVMERE…TTATKKPADS (185 aa)) are Cytoplasmic-facing. Catalysis depends on histidine 147, which acts as the Proton acceptor. The helical transmembrane segment at 186–206 (MAWWLFVGFWFMIRVTFTTIV) threads the bilayer. The Lumenal portion of the chain corresponds to 207–481 (EFSKLMLTVC…QGEIFHKTEV (275 aa)).

The protein in the N-terminal section; belongs to the long-chain O-acyltransferase family. Expressed in flowers, siliques, top parts of stems, and leaves. Not found in roots, seeds and young seedlings.

The protein localises to the cell membrane. Its subcellular location is the endoplasmic reticulum membrane. It carries out the reaction a long chain fatty alcohol + a fatty acyl-CoA = a wax ester + CoA. It catalyses the reaction an acyl-CoA + a 1,2-diacyl-sn-glycerol = a triacyl-sn-glycerol + CoA. The protein operates within glycerolipid metabolism; triacylglycerol biosynthesis. Its pathway is lipid metabolism. In terms of biological role, bifunctional wax ester synthase/diacylglycerol acyltransferase. Involved in cuticular wax biosynthesis. Required to reduce leaf water loss, especially during drought. This is Wax ester synthase/diacylglycerol acyltransferase 1 from Arabidopsis thaliana (Mouse-ear cress).